Reading from the N-terminus, the 146-residue chain is MPLVPKRVKHRREFRGKMRGAAKGGKYIAFGEYGLEALESHWITNRQIEAARVAMTRYMKRGGKVWIRIFPQKSYTAKGVGVRMGSGKGAPAGWVAVVKREKIMFEIGGVDEATAREALRLASTKLPIKTKFVTRSSEVGGESNEG.

The protein belongs to the universal ribosomal protein uL16 family. As to quaternary structure, part of the 50S ribosomal subunit.

Binds 23S rRNA and is also seen to make contacts with the A and possibly P site tRNAs. The sequence is that of Large ribosomal subunit protein uL16 from Lactobacillus helveticus (strain DPC 4571).